The chain runs to 137 residues: Acetyltransferase Atu2258 (137 aa).

The region spanning 1–137 is the N-acetyltransferase domain; the sequence is MNFVLSDVAD…QSITWLEKRF (137 aa). CoA is bound by residues 66-68, G74, and 108-110; these read LFV and RTY.

Functionally, catalyzes the transfer of an acetyl group from acetyl coenzyme A (AcCoA) to an acceptor substrate and releases both CoA and the acetylated product. It prefers glucosamine 6-phosphate or dopamine. It can also use the thialysine, N(8)-acetylspermidine, chloramphenicol, puromycin, polymyxin B, and 4-aminobutyrate ethyl ester. The polypeptide is Acetyltransferase Atu2258 (Agrobacterium fabrum (strain C58 / ATCC 33970) (Agrobacterium tumefaciens (strain C58))).